Reading from the N-terminus, the 52-residue chain is Phospholamban (52 aa).

Met-1 bears the N-acetylmethionine mark. Residues 1–31 (MEKVQYLTRSAIRRASTIEMPQQARQKLQNL) are Cytoplasmic-facing. The residue at position 16 (Ser-16) is a Phosphoserine; by PKA and DMPK. The interval 16 to 22 (STIEMPQ) is involved in HAX1 binding. Thr-17 is modified (phosphothreonine; by CaMK2). Residues 32-52 (FINFCLILICLLLICIIVMLL) form a helical membrane-spanning segment. Cys-36 is lipidated: S-palmitoyl cysteine.

This sequence belongs to the phospholamban family. Homopentamer. Can also form heterooligomers with other sarcoplasmic/endoplasmic reticulum calcium ATPase (SERCA) regulators ARLN, ERLN, SLN and STRIT1/DWORF. Monomer. Interacts with HAX1. Interacts as a monomer with ATP2A2; the interaction decreases ATP2A2 Ca(2+) affinity. Interacts with VMP1; VMP1 competes with PLN and SLN to prevent them from forming an inhibitory complex with ATP2A2. Interacts with S100A1 in a Ca(2+)-dependent manner. Phosphorylation by PKA abolishes the inhibition of ATP2A2-mediated calcium uptake. Phosphorylated at Thr-17 by CaMK2, and in response to beta-adrenergic stimulation. Phosphorylation by DMPK may stimulate sarcoplasmic reticulum calcium uptake in cardiomyocytes. Post-translationally, palmitoylated by ZDHHC16, promoting formation of the homopentamer. In terms of processing, in elongated spermatids, proteolytically cleaved by SPPL2C which modulates intracellular Ca(2+) homeostasis. Heart muscle (at protein level).

The protein resides in the endoplasmic reticulum membrane. It is found in the sarcoplasmic reticulum membrane. It localises to the mitochondrion membrane. The protein localises to the membrane. In terms of biological role, reversibly inhibits the activity of ATP2A2/SERCA2 in cardiac sarcoplasmic reticulum by decreasing the apparent affinity of the ATPase for Ca(2+). Binds preferentially to the ATP-bound E1 conformational form of ATP2A2 which predominates at low Ca(2+) concentrations during the diastolic phase of the cardiac cycle. Inhibits ATP2A2 Ca(2+) affinity by disrupting its allosteric activation by ATP. Modulates the contractility of the heart muscle in response to physiological stimuli via its effects on ATP2A2. Modulates calcium re-uptake during muscle relaxation and plays an important role in calcium homeostasis in the heart muscle. The degree of ATP2A2 inhibition depends on the oligomeric state of PLN. ATP2A2 inhibition is alleviated by PLN phosphorylation. Also inhibits the activity of ATP2A3/SERCA3. Controls intracellular Ca(2+) levels in elongated spermatids and may play a role in germ cell differentiation. In the thalamic reticular nucleus of the brain, plays a role in the regulation of sleep patterns and executive functioning. This chain is Phospholamban, found in Homo sapiens (Human).